The chain runs to 222 residues: UPF0758 protein YicR (222 aa).

The region spanning 100–222 (PLLSPEMTRE…NVSFAERGWI (123 aa)) is the MPN domain. H171, H173, and D184 together coordinate Zn(2+). Positions 171–184 (HNHPSGCAEPSKAD) match the JAMM motif motif.

This sequence belongs to the UPF0758 family. YicR subfamily.

The protein is UPF0758 protein YicR of Shigella boydii serotype 18 (strain CDC 3083-94 / BS512).